Consider the following 223-residue polypeptide: MKRTKSIHHASFRKSWSARHLTPVALAVTAVFMLAGCEKSDETVSLYQNADDCSAANPGKSAECTAAYNNALKEAERTAPKYATREDCVAEFGEGQCQQAPAQAGMAPENQAQAQQSSGSFWMPLMAGYMMGRLMGGGAGFAQQPLFSSKNPASPAYGKYTDAAGKNYGAAQPGRTMTVPKTAMAPKPATTTTVTRGGFGESVAKQSTMQRSAAGTSTRSMGG.

The segment covering 178–195 (TVPKTAMAPKPATTTTVT) has biased composition (low complexity). Residues 178–223 (TVPKTAMAPKPATTTTVTRGGFGESVAKQSTMQRSAAGTSTRSMGG) form a disordered region. Residues 204–223 (AKQSTMQRSAAGTSTRSMGG) show a composition bias toward polar residues.

Belongs to the UPF0441 family.

This chain is UPF0441 protein YgiB, found in Salmonella paratyphi A (strain ATCC 9150 / SARB42).